Reading from the N-terminus, the 304-residue chain is Mycothiol acetyltransferase (304 aa).

Residue Glu-36 participates in 1D-myo-inositol 2-(L-cysteinylamino)-2-deoxy-alpha-D-glucopyranoside binding. An acetyl-CoA-binding site is contributed by 73–75; it reads LFV. The N-acetyltransferase domain maps to 145-304; it reads LEIQTYTESV…EEHCVWAKSD (160 aa). Positions 179, 225, and 236 each coordinate 1D-myo-inositol 2-(L-cysteinylamino)-2-deoxy-alpha-D-glucopyranoside. Residue 240 to 242 coordinates acetyl-CoA; sequence VGL. A 1D-myo-inositol 2-(L-cysteinylamino)-2-deoxy-alpha-D-glucopyranoside-binding site is contributed by Tyr-274. 279 to 284 is a binding site for acetyl-CoA; sequence NDPAVK.

It belongs to the acetyltransferase family. MshD subfamily. As to quaternary structure, monomer.

It catalyses the reaction 1D-myo-inositol 2-(L-cysteinylamino)-2-deoxy-alpha-D-glucopyranoside + acetyl-CoA = mycothiol + CoA + H(+). Catalyzes the transfer of acetyl from acetyl-CoA to desacetylmycothiol (Cys-GlcN-Ins) to form mycothiol. The sequence is that of Mycothiol acetyltransferase from Corynebacterium aurimucosum (strain ATCC 700975 / DSM 44827 / CIP 107346 / CN-1) (Corynebacterium nigricans).